Reading from the N-terminus, the 329-residue chain is Interleukin-12 subunit beta (329 aa).

Positions 1 to 22 are cleaved as a signal peptide; that stretch reads MCHQWLVLSWFSLVLLASPLMA. Residues 29 to 106 enclose the Ig-like C2-type domain; sequence DVYVVELDWY…LSHSHLLLHK (78 aa). A disulfide bridge links cysteine 50 with cysteine 90. N-linked (GlcNAc...) asparagine glycosylation is found at asparagine 125, asparagine 135, and asparagine 223. The region spanning 238–329 is the Fibronectin type-III domain; the sequence is PPKNLQLKPL…WSEWASVSCS (92 aa).

The protein belongs to the IL-12B family. As to quaternary structure, heterodimer with IL12A; disulfide-linked. The heterodimer is known as interleukin IL-12. Heterodimer with IL23A; disulfide-linked. The heterodimer is known as interleukin IL-23. Also secreted as a monomer. Interacts with NBR1; this interaction promotes IL-12 secretion.

It localises to the secreted. In terms of biological role, cytokine that can act as a growth factor for activated T and NK cells, enhance the lytic activity of NK/lymphokine-activated killer cells, and stimulate the production of IFN-gamma by resting PBMC. Its function is as follows. Associates with IL23A to form the IL-23 interleukin, a heterodimeric cytokine which functions in innate and adaptive immunity. IL-23 may constitute with IL-17 an acute response to infection in peripheral tissues. IL-23 binds to a heterodimeric receptor complex composed of IL12RB1 and IL23R, activates the Jak-Stat signaling cascade, stimulates memory rather than naive T-cells and promotes production of pro-inflammatory cytokines. IL-23 induces autoimmune inflammation and thus may be responsible for autoimmune inflammatory diseases and may be important for tumorigenesis. The polypeptide is Interleukin-12 subunit beta (IL12B) (Equus caballus (Horse)).